A 285-amino-acid polypeptide reads, in one-letter code: 2-dehydro-3-deoxyphosphooctonate aldolase (285 aa).

This sequence belongs to the KdsA family.

The protein resides in the cytoplasm. The enzyme catalyses D-arabinose 5-phosphate + phosphoenolpyruvate + H2O = 3-deoxy-alpha-D-manno-2-octulosonate-8-phosphate + phosphate. It participates in carbohydrate biosynthesis; 3-deoxy-D-manno-octulosonate biosynthesis; 3-deoxy-D-manno-octulosonate from D-ribulose 5-phosphate: step 2/3. The protein operates within bacterial outer membrane biogenesis; lipopolysaccharide biosynthesis. The sequence is that of 2-dehydro-3-deoxyphosphooctonate aldolase from Bordetella bronchiseptica (strain ATCC BAA-588 / NCTC 13252 / RB50) (Alcaligenes bronchisepticus).